A 597-amino-acid chain; its full sequence is Probable translation initiation factor IF-2 (597 aa).

One can recognise a tr-type G domain in the interval 13–229 (LRTPIVCVMG…LLGLAQKFLE (217 aa)). The interval 22-29 (GHVDHGKT) is G1. 22–29 (GHVDHGKT) is a GTP binding site. Residues 47–51 (AITQH) form a G2 region. Residues 84–87 (DTPG) are G3. Residues 84 to 88 (DTPGH) and 138 to 141 (NKID) contribute to the GTP site. The interval 138–141 (NKID) is G4. A G5 region spans residues 206–208 (SAV).

This sequence belongs to the TRAFAC class translation factor GTPase superfamily. Classic translation factor GTPase family. IF-2 subfamily.

Functionally, function in general translation initiation by promoting the binding of the formylmethionine-tRNA to ribosomes. Seems to function along with eIF-2. The sequence is that of Probable translation initiation factor IF-2 from Methanosarcina acetivorans (strain ATCC 35395 / DSM 2834 / JCM 12185 / C2A).